Consider the following 421-residue polypeptide: Ethanolamine-phosphate cytidylyltransferase (421 aa).

Residues 8–28 traverse the membrane as a helical segment; the sequence is IVGSCIVGGAAFAVGASFLHL. The interval 203 to 227 is disordered; that stretch reads SRSSLQRQFSHGHSSPKFEDGASSA. Residues 204 to 215 show a composition bias toward polar residues; it reads RSSLQRQFSHGH. CTP contacts are provided by residues 262-263, 270-273, R298, 346-349, and 377-381; these read AF, HVEI, HGTV, and SPLDI. The segment at 402-421 is disordered; the sequence is AKKEASEKKYYEQKSFVSGD. Over residues 403–413 the composition is skewed to basic and acidic residues; sequence KKEASEKKYYE. S416 carries the phosphoserine modification.

The protein belongs to the cytidylyltransferase family. Expressed in root tip, lateral root primordia, leaves, shoot apex, stem vascular bundles, pollen and embryos.

The protein localises to the mitochondrion outer membrane. It carries out the reaction phosphoethanolamine + CTP + H(+) = CDP-ethanolamine + diphosphate. The protein operates within phospholipid metabolism; phosphatidylethanolamine biosynthesis; phosphatidylethanolamine from ethanolamine: step 2/3. Functionally, plays an important role in the biosynthesis of the phospholipid phosphatidylethanolamine. Catalyzes the formation of CDP-ethanolamine. Essential for early embryonic development. The polypeptide is Ethanolamine-phosphate cytidylyltransferase (Arabidopsis thaliana (Mouse-ear cress)).